The sequence spans 313 residues: Type I restriction enzyme EcoprrI endonuclease subunit (313 aa).

Belongs to the HsdR family. As to quaternary structure, the type I restriction/modification system is composed of three polypeptides R, M and S; the restriction enzyme has stoichiometry R(2)M(2)S(1) while the methyltransferase is M(2)S(1).

It catalyses the reaction Endonucleolytic cleavage of DNA to give random double-stranded fragments with terminal 5'-phosphates, ATP is simultaneously hydrolyzed.. Its function is as follows. The subtype C restriction (R) subunit of a type I restriction enzyme that recognizes 5'-CCAN(7)RTGC-3' and cleaves a random distance away. The R subunit is required for both endonuclease and ATPase activities but not for modification. Cleaves only non-methylated DNA, hemi-methylated and fully methylated DNA are not substrates. After locating a non-methylated recognition site, the enzyme complex serves as a molecular motor that translocates DNA in an ATP-dependent manner until a collision occurs that triggers cleavage. The prr locus restricts phage T4 mutants lacking polynucleotide kinase or RNA ligase; T4 mutants lacking these genes manifest a T4-induced anticodon nuclease (ACNase). This is a putative 'masking-agent' for the ACNase encoded by prrC. It is thought that Stp and other T4-encoded ACNase factors counteract the masking agents, thus activating the latent ACNase. The sequence is that of Type I restriction enzyme EcoprrI endonuclease subunit from Escherichia coli.